We begin with the raw amino-acid sequence, 416 residues long: MEFVKCLGHPEEFYNLLRFRMGGRRNFIPKMDQDSLSSSLKTCYKYLNQTSRSFAAVIQALDGDIRHAICVFYLVLRALDTVEDDMSISVEKKIPLLCNFHTFLYDPEWRFTESKEKDRQVLEDFPTISLEFRNLAEKYQTVIDDICHRMGCGMAEFVDKDVTSKQDWDKYCHYVAGLVGIGLSRLFSASEFEDPIVGEDIECANSMGLFLQKTNIIRDYLEDQQEGRKFWPQEVWGRYIKKLEDFAKPENVDVAVQCLNELITNTLQHIPDVLTYLSRLRNQSVFNFCAIPQVMAIATLAACYNNQQVFKGVVKIRKGQAVTLMMDATNMPAVKAIIYQYIEEIYHRIPNSDPSSSKTKQVISKIRTQNLPNCQLISRSHYSPIYLSFIMLLAALSWQYLSTLSQVTEDYVQREH.

Positions 52 and 77 each coordinate NADP(+). Residues Asp-80, Glu-83, and Asp-84 each coordinate Mg(2+). Arg-218 is an NADP(+) binding site. The helical transmembrane segment at 284–304 (SVFNFCAIPQVMAIATLAACY) threads the bilayer. Residues Lys-315 and Arg-317 each contribute to the NADP(+) site. Residues 384–404 (PIYLSFIMLLAALSWQYLSTL) traverse the membrane as a helical segment.

This sequence belongs to the phytoene/squalene synthase family. It depends on Mg(2+) as a cofactor.

The protein localises to the endoplasmic reticulum membrane. It catalyses the reaction 2 (2E,6E)-farnesyl diphosphate + NADPH + H(+) = squalene + 2 diphosphate + NADP(+). The catalysed reaction is 2 (2E,6E)-farnesyl diphosphate + NADH + H(+) = squalene + 2 diphosphate + NAD(+). The enzyme catalyses presqualene diphosphate + NADH + H(+) = squalene + diphosphate + NAD(+). It carries out the reaction presqualene diphosphate + NADPH + H(+) = squalene + diphosphate + NADP(+). It catalyses the reaction 2 (2E,6E)-farnesyl diphosphate = presqualene diphosphate + diphosphate. The protein operates within terpene metabolism; lanosterol biosynthesis; lanosterol from farnesyl diphosphate: step 1/3. Its function is as follows. Catalyzes the condensation of 2 farnesyl pyrophosphate (FPP) moieties to form squalene. Proceeds in two distinct steps. In the first half-reaction, two molecules of FPP react to form the stable presqualene diphosphate intermediate (PSQPP), with concomitant release of a proton and a molecule of inorganic diphosphate. In the second half-reaction, PSQPP undergoes heterolysis, isomerization, and reduction with NADPH or NADH to form squalene. It is the first committed enzyme of the sterol biosynthesis pathway. The sequence is that of Squalene synthase (Fdft1) from Mus musculus (Mouse).